The primary structure comprises 391 residues: Sister chromatid cohesion protein DCC1 (391 aa).

The protein belongs to the DCC1 family. As to quaternary structure, component of the ctf18-RFC complex which consists of ctf18, ctf8, dscc1 and the RFC complex.

The protein localises to the nucleus. In terms of biological role, loads pcna onto primed templates regulating velocity, spacing and restart activity of replication forks. May couple DNA replication to sister chromatid cohesion. The chain is Sister chromatid cohesion protein DCC1 (dscc1) from Xenopus tropicalis (Western clawed frog).